A 401-amino-acid polypeptide reads, in one-letter code: Nicotinamide/nicotinic acid mononucleotide adenylyltransferase 1 (401 aa).

Disordered stretches follow at residues 1 to 30 (MDPT…KIPK) and 48 to 123 (APFN…RGVQ). Positions 52–69 (IKRKKKHPKHHHHHHHSR) are enriched in basic residues. 4 positions are modified to phosphoserine: Ser91, Ser95, Ser96, and Ser111. NAD(+) is bound by residues Ser173 and Phe174. Residue His181 participates in ATP binding. Residues Thr253, Gly288, Asp290, Trp301, Arg320, and Asn351 each contribute to the NAD(+) site. 356–359 (TKVR) lines the ATP pocket.

The protein belongs to the eukaryotic NMN adenylyltransferase family. In terms of assembly, homotetramer. The cofactor is Ni(2+).

It is found in the cytoplasm. The protein resides in the nucleus. The catalysed reaction is beta-nicotinamide D-ribonucleotide + ATP + H(+) = diphosphate + NAD(+). The enzyme catalyses nicotinate beta-D-ribonucleotide + ATP + H(+) = deamido-NAD(+) + diphosphate. Its pathway is cofactor biosynthesis; NAD(+) biosynthesis; deamido-NAD(+) from nicotinate D-ribonucleotide: step 1/1. It participates in cofactor biosynthesis; NAD(+) biosynthesis; NAD(+) from nicotinamide D-ribonucleotide: step 1/1. Its function is as follows. Catalyzes the formation of NAD(+) from nicotinamide mononucleotide (NMN) and ATP. Can also use the deamidated form; nicotinic acid mononucleotide (NaMN) as substrate to form deamido-NAD(+) (NaAD). Key enzyme in both de novo and salvage pathways for NAD(+) biosynthesis. Predominantly acts in the salvage pathways via NMN. This Saccharomyces cerevisiae (strain ATCC 204508 / S288c) (Baker's yeast) protein is Nicotinamide/nicotinic acid mononucleotide adenylyltransferase 1.